A 522-amino-acid chain; its full sequence is Zinc finger protein C25B8.19c (522 aa).

Disordered regions lie at residues 1–25 (MSSD…LPTT), 61–96 (DPQA…SNSN), 235–265 (QRQS…QEVT), 311–386 (QPSS…HTLS), and 413–462 (NSAQ…STSS). The segment covering 84-96 (AGNTNTPTTSNSN) has biased composition (low complexity). Composition is skewed to polar residues over residues 311–321 (QPSSRDLQNHP) and 335–344 (ASNTLNHANG). A compositionally biased stretch (low complexity) spans 345–362 (NQAENASESSTSQSNDSQ). Positions 413–427 (NSAQAHPMGQQSDSN) are enriched in polar residues. Residues 428 to 438 (YSDHHNNDKRA) are compositionally biased toward basic and acidic residues. The span at 453 to 462 (SHTGSSSTSS) shows a compositional bias: low complexity. 2 consecutive C2H2-type zinc fingers follow at residues 468 to 495 (YRCT…GERP) and 496 to 522 (FVCD…IHGL).

The protein resides in the nucleus. This is Zinc finger protein C25B8.19c from Schizosaccharomyces pombe (strain 972 / ATCC 24843) (Fission yeast).